The sequence spans 611 residues: Pleckstrin homology domain-containing family N member 1 (611 aa).

A disordered region spans residues 1 to 45 (MGNSHCVPQAPRRLRASFSRKPSLKGNREDSARMSAGLPGPEAAR). G2 carries the N-myristoyl glycine lipid modification. The interaction with C1QBP stretch occupies residues 61–100 (TDILDLENQRENLEQPFLSVFKKGRRRVPVRNLGKVVHYA). PH domains lie at 96 to 192 (VVHY…TALL) and 222 to 319 (AVCA…THRE). Y302 is modified (phosphotyrosine). 3 disordered regions span residues 323–424 (PLPG…PVTP), 438–468 (ESSPDAPDHTSETSHSPLYADPYTPPATSHR), and 483–611 (MQSA…VQWI). The segment covering 341–350 (GSLSSGGQTS) has biased composition (low complexity). Polar residues predominate over residues 360 to 391 (STRTSHSLPESSVPSTVGCSSQHTPDQANSDR). Y456 is subject to Phosphotyrosine. Low complexity predominate over residues 498–509 (VPVSVPASDPRS). S559 is modified (phosphoserine). The segment covering 570–585 (RSPRRSRDPGYDHLWD) has biased composition (basic and acidic residues).

As to quaternary structure, found in a complex with cytochrome c mRNA and various ribosomal proteins. Interacts with C1QBP. Interacts with ELAVL1. Interacts with BID. Post-translationally, phosphorylation is essential for its mitochondrial localization and regulates its interaction with C1QBP. Ubiquitous. Epressed in several cancer cell lines of differing origin.

The protein localises to the cell membrane. It is found in the mitochondrion. The protein resides in the mitochondrion membrane. Functionally, controls the stability of the leptin mRNA harboring an AU-rich element (ARE) in its 3' UTR, in cooperation with the RNA stabilizer ELAVL1. Decreases the stability of the leptin mRNA by antagonizing the function of ELAVL1 by inducing its atypical recruitment from the nucleus to the cytosol. Binds to cardiolipin (CL), phosphatidic acid (PA), phosphatidylinositol 4-phosphate (PtdIns(4)P) and phosphatidylserine (PS). Promotes apoptosis by enhancing BAX-BAK hetero-oligomerization via interaction with BID in colon cancer cells. This is Pleckstrin homology domain-containing family N member 1 (PLEKHN1) from Homo sapiens (Human).